A 463-amino-acid chain; its full sequence is Argininosuccinate lyase (463 aa).

This sequence belongs to the lyase 1 family. Argininosuccinate lyase subfamily.

Its subcellular location is the cytoplasm. It catalyses the reaction 2-(N(omega)-L-arginino)succinate = fumarate + L-arginine. The protein operates within amino-acid biosynthesis; L-arginine biosynthesis; L-arginine from L-ornithine and carbamoyl phosphate: step 3/3. The polypeptide is Argininosuccinate lyase (Prochlorococcus marinus (strain NATL1A)).